Consider the following 492-residue polypeptide: Solute carrier family 2, facilitated glucose transporter member 1 (492 aa).

Residue Met1 is modified to N-acetylmethionine. The Cytoplasmic segment spans residues Met1–Arg11. The helical transmembrane segment at Leu12–Ile33 threads the bilayer. Residues Asn34–Ser66 lie on the Extracellular side of the membrane. N-linked (GlcNAc...) asparagine glycosylation occurs at Asn45. A helical transmembrane segment spans residues Leu67–Val87. The Cytoplasmic segment spans residues Asn88–Phe90. Residues Gly91–Phe112 traverse the membrane as a helical segment. At Ser113 to Glu120 the chain is on the extracellular side. The chain crosses the membrane as a helical span at residues Met121–Val144. Topologically, residues Gly145–Ala155 are cytoplasmic. Residues Leu156–Leu176 traverse the membrane as a helical segment. Gln161 provides a ligand contact to D-glucose. At Asp177–Leu185 the chain is on the extracellular side. Residues Trp186–Phe206 form a helical membrane-spanning segment. Residues Cys207–Pro271 lie on the Cytoplasmic side of the membrane. Residue Ser226 is modified to Phosphoserine. A helical membrane pass occupies residues Ile272–Tyr293. Residues Gln282–Gln283 and Asn288 each bind D-glucose. Residues Ser294 to Pro306 are Extracellular-facing. A helical transmembrane segment spans residues Val307 to Val328. Position 317 (Asn317) interacts with D-glucose. Residues Glu329–Arg334 lie on the Cytoplasmic side of the membrane. A helical transmembrane segment spans residues Thr335–Leu355. At Ala356–Ser365 the chain is on the extracellular side. A helical transmembrane segment spans residues Tyr366–Trp388. D-glucose contacts are provided by Glu380 and Trp388. Residues Phe389–Pro401 are Cytoplasmic-facing. Residues Ala402–Phe422 form a helical membrane-spanning segment. Topologically, residues Gln423–Cys429 are extracellular. The helical transmembrane segment at Gly430 to Phe450 threads the bilayer. Ser465 carries the post-translational modification Phosphoserine. Residues Arg468–Val492 form a disordered region. Thr478 is modified (phosphothreonine). Ser490 bears the Phosphoserine mark.

This sequence belongs to the major facilitator superfamily. Sugar transporter (TC 2.A.1.1) family. Glucose transporter subfamily. In terms of assembly, found in a complex with ADD2, DMTN and SLC2A1. Interacts (via C-terminus cytoplasmic region) with DMTN. Interacts with SNX27; the interaction is required when endocytosed to prevent degradation in lysosomes and promote recycling to the plasma membrane. Interacts with GIPC (via PDZ domain). Interacts with STOM. Interacts with SGTA (via Gln-rich region). Interacts with BSG. Interacts with SMIM43; the interaction may promote SLC2A1-mediated glucose transport to meet the energy needs of mesendoderm differentiation. In terms of processing, phosphorylation at Ser-226 by PKC promotes glucose uptake by increasing cell membrane localization.

The protein localises to the cell membrane. The protein resides in the photoreceptor inner segment. The enzyme catalyses D-glucose(out) = D-glucose(in). Its activity is regulated as follows. The uptake of glucose is inhibited by cytochalasin B. Glucose uptake is increased in response to phorbol ester 12-O-tetradecanoylphorbol-13-acetate (TPA) treatment: TPA-induced glucose uptake requires phosphorylation at Ser-226. Functionally, facilitative glucose transporter, which is responsible for constitutive or basal glucose uptake. Has a very broad substrate specificity; can transport a wide range of aldoses including both pentoses and hexoses. Most important energy carrier of the brain: present at the blood-brain barrier and assures the energy-independent, facilitative transport of glucose into the brain. In association with BSG and NXNL1, promotes retinal cone survival by increasing glucose uptake into photoreceptors. Required for mesendoderm differentiation. The polypeptide is Solute carrier family 2, facilitated glucose transporter member 1 (Sus scrofa (Pig)).